Reading from the N-terminus, the 461-residue chain is MLKIFNTLTRQKEEFKPIHAGEVGMYVCGITVYDLCHIGHGRTFVAFDVVARYLRFLGYKLKYVRNITDIDDKIIKRANENGESFVALVDRMIAEMHKDFDALNILRPDMEPRATHHIAEIIELTEQLIAKGHAYVADNGDVMFDVPTDPTYGVLSRQDLDQLQAGARVDVVDDKRNPMDFVLWKMSKEGEPSWPSPWGAGRPGWHIECSAMNCKQLGNHFDIHGGGSDLMFPHHENEIAQSTCAHDGQYVNYWMHSGMVMVDREKMSKSLGNFFTVRDVLKYYDAETVRYFLMSGHYRSQLNYSEENLKQARAALERLYTALRGTDKTVAPAGGEAFEARFIEAMDDDFNTPEAYSVLFDMAREVNRLKVEDMAAANAMASHLRKLSAVLGLLEQEPEAFLQSGAQADDSEVAEIEALIQQRLDARKAKDWAAADAARDRLNEMGIVLEDGPQGTTWRRK.

Position 28 (cysteine 28) interacts with Zn(2+). Positions 30-40 (ITVYDLCHIGH) match the 'HIGH' region motif. The Zn(2+) site is built by cysteine 209, histidine 234, and glutamate 238. The short motif at 266–270 (KMSKS) is the 'KMSKS' region element. Position 269 (lysine 269) interacts with ATP.

Belongs to the class-I aminoacyl-tRNA synthetase family. Monomer. Zn(2+) serves as cofactor.

The protein localises to the cytoplasm. The enzyme catalyses tRNA(Cys) + L-cysteine + ATP = L-cysteinyl-tRNA(Cys) + AMP + diphosphate. This is Cysteine--tRNA ligase from Escherichia coli O157:H7.